The following is a 350-amino-acid chain: Small ribosomal subunit biogenesis GTPase RsgA (350 aa).

The segment covering M1–N17 has biased composition (polar residues). The disordered stretch occupies residues M1–E27. The 170-residue stretch at T104 to F273 folds into the CP-type G domain. Residues N160–D163 and G214–S222 contribute to the GTP site. C297, C302, H304, and C310 together coordinate Zn(2+).

Belongs to the TRAFAC class YlqF/YawG GTPase family. RsgA subfamily. In terms of assembly, monomer. Associates with 30S ribosomal subunit, binds 16S rRNA. The cofactor is Zn(2+).

It is found in the cytoplasm. Functionally, one of several proteins that assist in the late maturation steps of the functional core of the 30S ribosomal subunit. Helps release RbfA from mature subunits. May play a role in the assembly of ribosomal proteins into the subunit. Circularly permuted GTPase that catalyzes slow GTP hydrolysis, GTPase activity is stimulated by the 30S ribosomal subunit. This Salmonella agona (strain SL483) protein is Small ribosomal subunit biogenesis GTPase RsgA.